Consider the following 555-residue polypeptide: Cilia- and flagella-associated protein 184 (555 aa).

Residues 1–12 (MDVSSEHTKDPG) show a composition bias toward basic and acidic residues. A disordered region spans residues 1–202 (MDVSSEHTKD…KSQEEGKRLY (202 aa)). Composition is skewed to acidic residues over residues 41–54 (GELE…EEEQ) and 95–105 (PEPEEPAEVGA). Residues 106-117 (EEPAQPEPGAGP) are compositionally biased toward low complexity. The span at 118-131 (EELEAEAGAEELEQ) shows a compositional bias: acidic residues. A compositionally biased stretch (basic and acidic residues) spans 174–202 (ETQRDGAESKERDGEGRPAKSQEEGKRLY). Coiled coils occupy residues 305–441 (YHQE…NSVQ) and 505–531 (DSLL…LKRH).

It belongs to the CFAP184 family. Forms a complex with CFAP263; the interaction is required for functional activity in cilia.

The protein localises to the cell projection. The protein resides in the cilium. It is found in the cytoplasm. It localises to the cytoskeleton. Its subcellular location is the microtubule organizing center. The protein localises to the centrosome. In terms of biological role, in complex with CFAP263, acts as a regulator of ciliary beating that connects radial spoke 3 (RS3) to the inner dynein arm (IDA) and the nexin-dynein regulatory complex (N-DRC). The complex is positioned parallel to N-DRC and forms a connection between the arch at the base of RS3, the IDA tail and N-DRC. This chain is Cilia- and flagella-associated protein 184, found in Homo sapiens (Human).